The primary structure comprises 188 residues: Putative manganese efflux pump MntP (188 aa).

6 consecutive transmembrane segments (helical) span residues L2–V22, I40–L60, I66–I86, L107–I127, L133–F153, and L167–F187.

The protein belongs to the MntP (TC 9.B.29) family.

It is found in the cell inner membrane. Probably functions as a manganese efflux pump. The chain is Putative manganese efflux pump MntP from Parabacteroides distasonis (strain ATCC 8503 / DSM 20701 / CIP 104284 / JCM 5825 / NCTC 11152).